We begin with the raw amino-acid sequence, 387 residues long: O-methyltransferase fsr2 (387 aa).

Asp231 lines the S-adenosyl-L-methionine pocket. The Proton acceptor role is filled by His280.

It belongs to the class I-like SAM-binding methyltransferase superfamily. Cation-independent O-methyltransferase family. COMT subfamily.

Its pathway is polyketide biosynthesis. Its function is as follows. O-methyltransferase; part of the gene cluster that mediates the biosynthesis of fusarubins, highly pigmented naphthoquinones responsible for the coloration of the fruiting bodies. The non-reducing polyketide synthase FSR1 is responsible for the condensation of seven acetyl-CoA units to yield a haptaketide. After rings A and B are formed by aldol-type cyclization, the PKS-derived product is released as 6-O-demethylfusarubinaldehyde. Then, two hydroxyl groups at C-5 and C-10 are incorporated by FSR3, and simultaneously hydroxyl groups at C-6 and C-8 are methylated by FSR2. The aldehyde is, on the one hand, reduced by FSR3 to 8-O-methylfusarubin alcohol, which equilibrates mainly with 8-O-methylfusarubin and only small amounts of 8-O-methylnectriafurone. On the other hand, the aldehyde can be oxidized to form 8-O-methylfusarubinic acid, a reaction driven by FSR3 equilibrating with 8-O-methylfusarubinlactone, finally resulting in 8-O-methylanhydrofusarubinlactol after a further reduction step and loss of water. 8-O-Methylfusarubinic acid can also undergo decarboxylation, resulting in 8-O-methyl-13-hydroxynorjavanicin after another hydroxylation step at C-13. Both steps are most likely also accomplished by FSR3. No enzymatic function has been determined so far for either FSR4 and FSR5. Their deletion does not alter the product spectrum, but the possibility that they catalyze specific enzymatic steps during perithecium development cannot be ruled out. FSR4 might possess a regulatory function in the biosynthesis of fusarubins. The polypeptide is O-methyltransferase fsr2 (Gibberella fujikuroi (strain CBS 195.34 / IMI 58289 / NRRL A-6831) (Bakanae and foot rot disease fungus)).